The primary structure comprises 193 residues: Xanthine phosphoribosyltransferase (193 aa).

2 residues coordinate xanthine: Leu-20 and Thr-27. 128–132 is a 5-phospho-alpha-D-ribose 1-diphosphate binding site; it reads ANGQA. Lys-156 is a binding site for xanthine.

It belongs to the purine/pyrimidine phosphoribosyltransferase family. Xpt subfamily. Homodimer.

The protein resides in the cytoplasm. It catalyses the reaction XMP + diphosphate = xanthine + 5-phospho-alpha-D-ribose 1-diphosphate. The protein operates within purine metabolism; XMP biosynthesis via salvage pathway; XMP from xanthine: step 1/1. Converts the preformed base xanthine, a product of nucleic acid breakdown, to xanthosine 5'-monophosphate (XMP), so it can be reused for RNA or DNA synthesis. The protein is Xanthine phosphoribosyltransferase of Streptococcus pyogenes serotype M5 (strain Manfredo).